A 75-amino-acid chain; its full sequence is DNA-directed RNA polymerase subunit omega (75 aa).

Belongs to the RNA polymerase subunit omega family. In terms of assembly, in cyanobacteria the RNAP catalytic core is composed of 2 alpha, 1 beta, 1 beta', 1 gamma and 1 omega subunit. When a sigma factor is associated with the core the holoenzyme is formed, which can initiate transcription.

The enzyme catalyses RNA(n) + a ribonucleoside 5'-triphosphate = RNA(n+1) + diphosphate. Promotes RNA polymerase assembly. Latches the N- and C-terminal regions of the beta' subunit thereby facilitating its interaction with the beta and alpha subunits. This Prochlorococcus marinus (strain MIT 9313) protein is DNA-directed RNA polymerase subunit omega.